Reading from the N-terminus, the 195-residue chain is Aminoglycoside 2'-N-acetyltransferase (195 aa).

In terms of domain architecture, N-acetyltransferase spans 21–180 (VHTSDLDQET…VGLPAGMELD (160 aa)). Substrate is bound by residues aspartate 45 and 92-93 (EA). CoA is bound by residues 94–96 (VAV) and 101–106 (RGQGLA). Substrate contacts are provided by residues serine 127 and 161–162 (ED).

This sequence belongs to the AAC(2')-I acetyltransferase family. As to quaternary structure, homodimer.

In terms of biological role, confers resistance to gentamicin, tobramycin, dibekacin, netilmicin, and 6'-N-ethylnetilmicin. This chain is Aminoglycoside 2'-N-acetyltransferase (aac), found in Mycolicibacterium fortuitum (Mycobacterium fortuitum).